The primary structure comprises 339 residues: Methylthioribose-1-phosphate isomerase (339 aa).

Residues arginine 49 to alanine 51, arginine 86, and glutamine 187 contribute to the substrate site. The active-site Proton donor is the aspartate 228. Position 238–239 (asparagine 238–lysine 239) interacts with substrate.

It belongs to the eIF-2B alpha/beta/delta subunits family. MtnA subfamily.

It carries out the reaction 5-(methylsulfanyl)-alpha-D-ribose 1-phosphate = 5-(methylsulfanyl)-D-ribulose 1-phosphate. It participates in amino-acid biosynthesis; L-methionine biosynthesis via salvage pathway; L-methionine from S-methyl-5-thio-alpha-D-ribose 1-phosphate: step 1/6. Functionally, catalyzes the interconversion of methylthioribose-1-phosphate (MTR-1-P) into methylthioribulose-1-phosphate (MTRu-1-P). This chain is Methylthioribose-1-phosphate isomerase, found in Cronobacter sakazakii (strain ATCC BAA-894) (Enterobacter sakazakii).